A 64-amino-acid chain; its full sequence is U6-theraphotoxin-Cg1a (64 aa).

The signal sequence occupies residues 1-20 (MTRKILAVLLVFTLVACNNA). Residues 21–38 (EKYSETDVEDSPMIQERR) constitute a propeptide that is removed on maturation. Disulfide bonds link cysteine 39–cysteine 55, cysteine 46–cysteine 58, and cysteine 54–cysteine 63.

Belongs to the neurotoxin 36 family. 02 subfamily. In terms of tissue distribution, expressed by the venom gland.

It localises to the secreted. Its function is as follows. Probable ion channel inhibitor. In Chilobrachys guangxiensis (Chinese earth tiger tarantula), this protein is U6-theraphotoxin-Cg1a.